The following is a 526-amino-acid chain: Cytochrome P450 monooxygenase 226 (526 aa).

A helical transmembrane segment spans residues 15-35 (FATSYAALTVAAVTLLAALLV). N-linked (GlcNAc...) asparagine glycosylation is found at asparagine 219, asparagine 277, and asparagine 320. Residue cysteine 452 participates in heme binding.

It belongs to the cytochrome P450 family. It depends on heme as a cofactor.

Its subcellular location is the membrane. The protein operates within secondary metabolite biosynthesis. Cytochrome P450 monooxygenase that is able to use anthracene, carbazole and phenanthrene as substrates for oxidation. These multifunctional properties against a series of polycyclic aromatic hydrocarbons (PAHs) suggest that CYP226 would play important roles, at least in part, in fungal metabolic systems involved in xenobiotic detoxification. This Postia placenta (strain ATCC 44394 / Madison 698-R) (Brown rot fungus) protein is Cytochrome P450 monooxygenase 226.